We begin with the raw amino-acid sequence, 113 residues long: Gamma-glutamylcyclotransferase family protein YtfP (113 aa).

This sequence belongs to the gamma-glutamylcyclotransferase family.

This is Gamma-glutamylcyclotransferase family protein YtfP (ytfP) from Escherichia coli O157:H7.